The sequence spans 426 residues: Putative F-box/LRR-repeat protein At4g15060 (426 aa).

Positions 25 to 71 constitute an F-box domain; sequence MDKISRLPDDLLVKVLLFLPTKIAVSTSILSKRWEFLWMWLPKLEYH. 9 LRR repeats span residues 50–75, 80–106, 160–187, 188–213, 221–259, 265–290, 311–337, 338–363, and 373–399; these read STSILSKRWEFLWMWLPKLEYHNTNY, EQRLRSFINLNLQLHRAPIIESLRLKF, ILKLKDQILVDVPRMAYLPSLKYLLLKR, VTYKDSNSLHQLLSSCPVLKNLVVER, TLSITVSSLQRLTLKISRGGSFDELVINTPSLKYFKLTD, ETELDDDSYSYVFKDMPKLEEAHIDS, CVKVNAEEALYREGICFKQLEHLKLCP, CDSNWSKLLARLLKDSPNLRELEIKL, and DPACLENQLNYVVQSSIPSLERFTWTW.

The sequence is that of Putative F-box/LRR-repeat protein At4g15060 from Arabidopsis thaliana (Mouse-ear cress).